The primary structure comprises 144 residues: Large ribosomal subunit protein uL15 (144 aa).

Positions 1–54 are disordered; the sequence is MHLNTLKPAEGAKKLAKRKGRGQGSGNGKMAGRGHKGQKSRSGGMPKIGFEGGQ. Residues 22–31 are compositionally biased toward gly residues; it reads GQGSGNGKMA.

It belongs to the universal ribosomal protein uL15 family. Part of the 50S ribosomal subunit.

Its function is as follows. Binds to the 23S rRNA. This Hydrogenovibrio crunogenus (strain DSM 25203 / XCL-2) (Thiomicrospira crunogena) protein is Large ribosomal subunit protein uL15.